Consider the following 82-residue polypeptide: Putative Fe(2+) transport protein A (82 aa).

It belongs to the FeoA family.

Its function is as follows. Might be involved in Fe(2+) ion uptake. In Methanocaldococcus jannaschii (strain ATCC 43067 / DSM 2661 / JAL-1 / JCM 10045 / NBRC 100440) (Methanococcus jannaschii), this protein is Putative Fe(2+) transport protein A.